Consider the following 241-residue polypeptide: Glucosamine-6-phosphate deaminase (241 aa).

Residue D67 is the Proton acceptor; for enolization step of the active site. The active-site For ring-opening step is the N136. The active-site Proton acceptor; for ring-opening step is H138. E143 (for ring-opening step) is an active-site residue.

The protein belongs to the glucosamine/galactosamine-6-phosphate isomerase family. NagB subfamily.

The enzyme catalyses alpha-D-glucosamine 6-phosphate + H2O = beta-D-fructose 6-phosphate + NH4(+). The protein operates within amino-sugar metabolism; N-acetylneuraminate degradation; D-fructose 6-phosphate from N-acetylneuraminate: step 5/5. Its function is as follows. Catalyzes the reversible isomerization-deamination of glucosamine 6-phosphate (GlcN6P) to form fructose 6-phosphate (Fru6P) and ammonium ion. This chain is Glucosamine-6-phosphate deaminase, found in Clostridium tetani (strain Massachusetts / E88).